We begin with the raw amino-acid sequence, 157 residues long: Increased recombination centers protein 23 (157 aa).

The Cytoplasmic portion of the chain corresponds to Met1–Glu6. The helical transmembrane segment at Ile7–Ile29 threads the bilayer. Topologically, residues Pro30–Gly33 are lumenal. A helical transmembrane segment spans residues Leu34–Tyr56. Residues Lys57–Ile157 lie on the Cytoplasmic side of the membrane.

The protein localises to the endoplasmic reticulum membrane. Is probably involved in a pathway contributing to genomic integrity. This is Increased recombination centers protein 23 (IRC23) from Saccharomyces cerevisiae (strain ATCC 204508 / S288c) (Baker's yeast).